The primary structure comprises 518 residues: Nuclear receptor ROR-gamma (518 aa).

The segment at 1–30 (MDRAPQRQHQASRELLAAKKTHTSQIEVIP) is modulating. NR C4-type zinc fingers lie at residues 31 to 51 (CKIC…CEGC) and 67 to 91 (CTRQ…LQKC). A DNA-binding region (nuclear receptor) is located at residues 31-96 (CKICGDKSSG…RLQKCLALGM (66 aa)). Disordered stretches follow at residues 105-183 (RMSK…SGSG) and 238-258 (HPGL…SFRS). Residues 109 to 118 (KQRDSLHAEV) show a composition bias toward basic and acidic residues. Low complexity predominate over residues 119–130 (QKQLQQRQQQQQ). One can recognise an NR LBD domain in the interval 269–508 (EIEHLVQSVC…PPLYKELFST (240 aa)). Residues 501 to 506 (LYKELF) carry the AF-2 motif.

The protein belongs to the nuclear hormone receptor family. NR1 subfamily. As to quaternary structure, interacts (via AF-2 motif) with the coactivators NCOA1, NCOA2 and PPARGC1A (via LXXLL motif). Interacts with the corepressor NCOR1. Interacts with CRY1. Interacts (via AF-2 motif) with PROX1. Interacts with FOXP3. Interacts with NR0B2.

Its subcellular location is the nucleus. Functionally, nuclear receptor that binds DNA as a monomer to ROR response elements (RORE) containing a single core motif half-site 5'-AGGTCA-3' preceded by a short A-T-rich sequence. Key regulator of cellular differentiation, immunity, peripheral circadian rhythm as well as lipid, steroid, xenobiotics and glucose metabolism. Considered to have intrinsic transcriptional activity, have some natural ligands like oxysterols that act as agonists (25-hydroxycholesterol) or inverse agonists (7-oxygenated sterols), enhancing or repressing the transcriptional activity, respectively. Recruits distinct combinations of cofactors to target gene regulatory regions to modulate their transcriptional expression, depending on the tissue, time and promoter contexts. Regulates the circadian expression of clock genes such as CRY1, BMAL1 and NR1D1 in peripheral tissues and in a tissue-selective manner. Competes with NR1D1 for binding to their shared DNA response element on some clock genes such as BMAL1, CRY1 and NR1D1 itself, resulting in NR1D1-mediated repression or RORC-mediated activation of the expression, leading to the circadian pattern of clock genes expression. Therefore influences the period length and stability of the clock. Involved in the regulation of the rhythmic expression of genes involved in glucose and lipid metabolism, including PLIN2 and AVPR1A. Negative regulator of adipocyte differentiation through the regulation of early phase genes expression, such as MMP3. Controls adipogenesis as well as adipocyte size and modulates insulin sensitivity in obesity. In liver, has specific and redundant functions with RORA as positive or negative modulator of expression of genes encoding phase I and Phase II proteins involved in the metabolism of lipids, steroids and xenobiotics, such as SULT1E1. Also plays a role in the regulation of hepatocyte glucose metabolism through the regulation of G6PC1 and PCK1. Essential for thymopoiesis and the development of several secondary lymphoid tissues, including lymph nodes and Peyer's patches. Required for the generation of LTi (lymphoid tissue inducer) cells. Regulates thymocyte survival through DNA-binding on ROREs of target gene promoter regions and recruitment of coactivaros via the AF-2. Also plays a key role, downstream of IL6 and TGFB and synergistically with RORA, for lineage specification of uncommitted CD4(+) T-helper (T(H)) cells into T(H)17 cells, antagonizing the T(H)1 program. Probably regulates IL17 and IL17F expression on T(H) by binding to the essential enhancer conserved non-coding sequence 2 (CNS2) in the IL17-IL17F locus. May also play a role in the pre-TCR activation cascade leading to the maturation of alpha/beta T-cells and may participate in the regulation of DNA accessibility in the TCR-J(alpha) locus. Regulates the rhythmic expression of PROX1 and promotes its nuclear localization. Plays an indispensable role in the induction of IFN-gamma dependent anti-mycobacterial systemic immunity. The protein is Nuclear receptor ROR-gamma (RORC) of Pongo abelii (Sumatran orangutan).